A 227-amino-acid chain; its full sequence is Endonuclease V (227 aa).

Residues Asp-46 and Asp-114 each contribute to the Mg(2+) site.

Belongs to the endonuclease V family. It depends on Mg(2+) as a cofactor.

It localises to the cytoplasm. It catalyses the reaction Endonucleolytic cleavage at apurinic or apyrimidinic sites to products with a 5'-phosphate.. Functionally, DNA repair enzyme involved in the repair of deaminated bases. Selectively cleaves double-stranded DNA at the second phosphodiester bond 3' to a deoxyinosine leaving behind the intact lesion on the nicked DNA. The chain is Endonuclease V from Alkalilimnicola ehrlichii (strain ATCC BAA-1101 / DSM 17681 / MLHE-1).